The following is a 306-amino-acid chain: Mitochondrial substrate carrier family protein ucpA (306 aa).

Residues 1–15 lie on the Mitochondrial intermembrane side of the membrane; that stretch reads MSVNLNNNKNNKNKV. Solcar repeat units follow at residues 13–103, 112–204, and 211–301; these read NKVA…ISNA, YFFL…CKNL, and DGIY…FKKL. Residues 16-36 traverse the membrane as a helical segment; the sequence is AIGFISGSLASICATTVTNPI. Residues 37–83 lie on the Mitochondrial matrix side of the membrane; it reads ELVKTRLQLQGELQLSQRIYNGVWDAFKQIYKTEGIRGLQSGLIPAY. Residues 84-103 form a helical membrane-spanning segment; that stretch reads FSQATMQGIRLGSFDLISNA. At 104–117 the chain is on the mitochondrial intermembrane side; sequence LGAKPNQDYFFLKN. The helical transmembrane segment at 118 to 138 threads the bilayer; that stretch reads LLAGATAGAIGAAAGSPFDLV. The Mitochondrial matrix segment spans residues 139-174; the sequence is KVRMQAANMYKNDPQFVGYSSSFAAFKQIIQKEGFK. The helical transmembrane segment at 175-195 threads the bilayer; sequence GLTRGMLTSAQRTAVGSAIQL. Topologically, residues 196–211 are mitochondrial intermembrane; sequence STYGSCKNLVLNFVDD. The helical transmembrane segment at 212–232 threads the bilayer; the sequence is GIYAYIISSMVAGFIVTFGMN. The Mitochondrial matrix segment spans residues 233–276; that stretch reads PFDVARTRLYFQGKGNSHGEIYKGLMDCVYKTVKKEGFGAVYKG. A helical membrane pass occupies residues 277 to 295; sequence FWAHYLRLGPHTILTLVFW. Over 296–306 the chain is Mitochondrial intermembrane; sequence EQFKKLFSGEL.

This sequence belongs to the mitochondrial carrier (TC 2.A.29) family.

Its subcellular location is the mitochondrion inner membrane. Functionally, mitochondrial solute carriers shuttle metabolites, nucleotides, and cofactors through the mitochondrial inner membrane. Transports oxaloacetate and sulfate. This is Mitochondrial substrate carrier family protein ucpA (ucpA) from Dictyostelium discoideum (Social amoeba).